The chain runs to 587 residues: Cyclic di-GMP phosphodiesterase PA2567 (587 aa).

One can recognise a GAF domain in the interval 28 to 157 (DEVFEEILAA…LEHFARLVMA (130 aa)). A GGDEF domain is found at 192–327 (GALTVIAADL…GVGWARYNPP (136 aa)). Residues 335 to 587 (AFTLLTSLSQ…PEQLEDWLRR (253 aa)) form the EAL domain.

It carries out the reaction 3',3'-c-di-GMP + H2O = 5'-phosphoguanylyl(3'-&gt;5')guanosine + H(+). Phosphodiesterase (PDE) that catalyzes the hydrolysis of cyclic diguanylate (c-di-GMP) to 5'-pGpG. In Pseudomonas aeruginosa (strain ATCC 15692 / DSM 22644 / CIP 104116 / JCM 14847 / LMG 12228 / 1C / PRS 101 / PAO1), this protein is Cyclic di-GMP phosphodiesterase PA2567.